Consider the following 394-residue polypeptide: Elongation factor Tu 1 (394 aa).

A tr-type G domain is found at 10–204 (KPHVNVGTIG…ALDTYIPEPE (195 aa)). The G1 stretch occupies residues 19-26 (GHVDHGKT). 19–26 (GHVDHGKT) provides a ligand contact to GTP. Mg(2+) is bound at residue Thr-26. The interval 60–64 (GITIS) is G2. Residues 81-84 (DCPG) form a G3 region. Residues 81–85 (DCPGH) and 136–139 (NKCD) contribute to the GTP site. Residues 136-139 (NKCD) are G4. Residues 174 to 176 (SAL) are G5.

The protein belongs to the TRAFAC class translation factor GTPase superfamily. Classic translation factor GTPase family. EF-Tu/EF-1A subfamily. In terms of assembly, monomer.

The protein resides in the cytoplasm. It carries out the reaction GTP + H2O = GDP + phosphate + H(+). Functionally, GTP hydrolase that promotes the GTP-dependent binding of aminoacyl-tRNA to the A-site of ribosomes during protein biosynthesis. The protein is Elongation factor Tu 1 of Vibrio vulnificus (strain CMCP6).